The sequence spans 628 residues: FAD-linked oxidoreductase easE (628 aa).

Residues 1–20 (MSHRILCVAFCVCSLVAVSS) form the signal peptide. Residues 144–328 (HQGRIPLYSA…TRATMRVHLN (185 aa)) form the FAD-binding PCMH-type domain. At His182 the chain carries Pros-8alpha-FAD histidine. N-linked (GlcNAc...) asparagine glycans are attached at residues Asn343, Asn382, and Asn487.

Belongs to the oxygen-dependent FAD-linked oxidoreductase family. Requires FAD as cofactor.

It functions in the pathway alkaloid biosynthesis; ergot alkaloid biosynthesis. Functionally, FAD binding oxidoreductase; part of the gene cluster that mediates the biosynthesis of fumiclavanine C, a fungal ergot alkaloid. DmaW catalyzes the first step of ergot alkaloid biosynthesis by condensing dimethylallyl diphosphate (DMAP) and tryptophan to form 4-dimethylallyl-L-tryptophan. The second step is catalyzed by the methyltransferase easF that methylates 4-dimethylallyl-L-tryptophan in the presence of S-adenosyl-L-methionine, resulting in the formation of 4-dimethylallyl-L-abrine. The catalase easC and the FAD-dependent oxidoreductase easE then transform 4-dimethylallyl-L-abrine to chanoclavine-I which is further oxidized by EasD in the presence of NAD(+), resulting in the formation of chanoclavine-I aldehyde. EasA reduces chanoclavine-I aldehyde to dihydrochanoclavine-I aldehyde that spontaneously dehydrates to form 6,8-dimethyl-6,7-didehydroergoline. EasG then catalyzes the reduction of 6,8-dimethyl-6,7-didehydroergoline to form festuclavine. Hydrolysis of festuclavine by easM then leads to the formation of fumigaclavine B which is in turn acetylated by easN to fumigaclavine A. Finally, easL catalyzes the conversion of fumigaclavine A into fumigaclavine C by attaching a dimethylallyl moiety to C-2 of the indole nucleus. The chain is FAD-linked oxidoreductase easE from Aspergillus fumigatus (strain ATCC MYA-4609 / CBS 101355 / FGSC A1100 / Af293) (Neosartorya fumigata).